The following is a 354-amino-acid chain: Peptide chain release factor 1 (354 aa).

The residue at position 233 (Gln233) is an N5-methylglutamine.

Belongs to the prokaryotic/mitochondrial release factor family. In terms of processing, methylated by PrmC. Methylation increases the termination efficiency of RF1.

Its subcellular location is the cytoplasm. Its function is as follows. Peptide chain release factor 1 directs the termination of translation in response to the peptide chain termination codons UAG and UAA. This chain is Peptide chain release factor 1, found in Clostridioides difficile (strain 630) (Peptoclostridium difficile).